A 125-amino-acid polypeptide reads, in one-letter code: MIYDFKAEIIKAKNSSFSKSGSHHWLLQRVTGVILALCSFWLIYFMFTNKNNDINIIMWEFKKPFNIVILLITVTISLYHSVLGMRVVIEDYINCHKLRNTLIIIVKLFCILTIVSFVVAIFYSG.

The Cytoplasmic segment spans residues 1-24; sequence MIYDFKAEIIKAKNSSFSKSGSHH. A helical transmembrane segment spans residues 25–45; sequence WLLQRVTGVILALCSFWLIYF. The Periplasmic segment spans residues 46-67; the sequence is MFTNKNNDINIIMWEFKKPFNI. The helical transmembrane segment at 68-89 threads the bilayer; the sequence is VILLITVTISLYHSVLGMRVVI. Residue His80 participates in heme binding. Topologically, residues 90–99 are cytoplasmic; that stretch reads EDYINCHKLR. Tyr92 is a binding site for a ubiquinone. Residues 100–123 traverse the membrane as a helical segment; it reads NTLIIIVKLFCILTIVSFVVAIFY.

As to quaternary structure, part of an enzyme complex containing four subunits: a flavoprotein, an iron-sulfur protein, plus two membrane-anchoring proteins, SdhC and SdhD. The cofactor is heme.

The protein localises to the cell inner membrane. It participates in carbohydrate metabolism; tricarboxylic acid cycle. In terms of biological role, membrane-anchoring subunit of succinate dehydrogenase (SDH). This Rickettsia prowazekii (strain Madrid E) protein is Succinate dehydrogenase hydrophobic membrane anchor subunit (sdhD).